A 366-amino-acid polypeptide reads, in one-letter code: MAARQQQKGTGFGVQYEDFVPKSEWKDQPEATILNIDLTGFAKEQMKVTYVHSSKMIRVTGERPLANRKWNRFNEVFTVPQNCLVDKIHGSFKNNVLTITMPKETITKVAYLPETSRTEAAALEKAAKLEEKRLLEESRRKEKEEEEAKQMKKQLLEEKEALIRKLQEEAKAKEEAEMRKLQEEAKANEEAAAKKLQEEIEAKEKLEERKLEERRLEERKLEDMKLAEEAKLKKIQERKSVDESGEKEKILKPEVVYTKSGHVATPKPESGSGLKSGFGGVGEVVKLAEEKLGNLVEKEKKMGKGIMEKIRRKEITSEEKKLMMNVGVAALVIFALGAYVSYTFCSSSSSSSSSSPSSSSSSTKPE.

The sHSP domain occupies 14–121 (VQYEDFVPKS…LPETSRTEAA (108 aa)). The A-1 repeat unit spans residues 129 to 133 (LEEKR). The segment at 129–220 (LEEKRLLEES…LEERRLEERK (92 aa)) is 6 X 5 AA repeats A of L-E-E-[SKR]-[ERK]. Residues 135-139 (LEESR) form an A-2 repeat. The A-3 repeat unit spans residues 156–160 (LEEKE). A B-1 repeat occupies 163–176 (IRKLQEEAKAKEEA). A 3 X 14 AA repeats B of [IMA]-[RK]-K-L-Q-E-E-A-K-A-K-E-[EK]-[LA] region spans residues 163 to 206 (IRKLQEEAKAKEEAEMRKLQEEAKANEEAAAKKLQEEIEAKEKL). The stretch at 178–191 (MRKLQEEAKANEEA) is one B-2 repeat. Residues 193–205 (AKKLQEEIEAKEK) form a B-3 repeat. The stretch at 206-210 (LEERK) is one A-4 repeat. Residues 211–215 (LEERR) form an A-5 repeat. One copy of the A-6 repeat lies at 216 to 220 (LEERK). A helical transmembrane segment spans residues 322–342 (LMMNVGVAALVIFALGAYVSY). The tract at residues 345 to 366 (CSSSSSSSSSSPSSSSSSTKPE) is disordered. Low complexity predominate over residues 346–366 (SSSSSSSSSSPSSSSSSTKPE).

This sequence belongs to the small heat shock protein (HSP20) family.

The protein resides in the cell membrane. In terms of biological role, seems to not be involved in heat resistance. Unable to mediate restriction of long-distance movement of the pathogenic tobacco etch virus (TEV) without causing a hypersensitive response or inducing systemic acquired resistance. The protein is Inactive protein RESTRICTED TEV MOVEMENT 2 (RTM2) of Arabidopsis thaliana (Mouse-ear cress).